Here is a 449-residue protein sequence, read N- to C-terminus: Sensor protein QseC (449 aa).

Over 1–12 the chain is Cytoplasmic; it reads MKFTQRLSLRVR. Residues 13-33 form a helical membrane-spanning segment; sequence LTLIFLILASVTWLLSSFVAW. The Periplasmic portion of the chain corresponds to 34-156; it reads KQTTDNVDEL…QEWEYREDMA (123 aa). The chain crosses the membrane as a helical span at residues 157-177; that stretch reads LAIVAGQLIPWLVALPIMLII. Over 178 to 449 the chain is Cytoplasmic; that stretch reads MMVLLGRELA…QGGFEAKVSW (272 aa). Residues 243–449 form the Histidine kinase domain; sequence DAAHELRSPL…QGGFEAKVSW (207 aa). At H246 the chain carries Phosphohistidine; by autocatalysis.

It localises to the cell inner membrane. It catalyses the reaction ATP + protein L-histidine = ADP + protein N-phospho-L-histidine.. In terms of biological role, member of a two-component regulatory system QseB/QseC. Activates the flagella regulon by activating transcription of FlhDC. May activate QseB by phosphorylation. This is Sensor protein QseC (qseC) from Escherichia coli (strain K12).